A 908-amino-acid chain; its full sequence is 26S proteasome non-ATPase regulatory subunit 2 (908 aa).

N-acetylmethionine is present on M1. The segment at M1–L52 is disordered. Residues G24–L52 show a composition bias toward basic and acidic residues. S29 and S147 each carry phosphoserine. Y194 carries the post-translational modification Phosphotyrosine. A phosphoserine mark is found at S361 and S363. PC repeat units follow at residues S409–S442, G443–L479, G480–V514, V517–K551, and L560–S589. The residue at position 551 (K551) is an N6-acetyllysine. Over residues K623 to P643 the composition is skewed to basic and acidic residues. The interval K623–D645 is disordered. PC repeat units lie at residues L692–Y723 and A742–N757. The segment at D708–N903 is required for interaction with UBLCP1.

The protein belongs to the proteasome subunit S2 family. Component of the 19S proteasome regulatory particle complex. The 26S proteasome consists of a 20S core particle (CP) and two 19S regulatory subunits (RP). The regulatory particle is made of a lid composed of 9 subunits, a base containing 6 ATPases and few additional components including PSMD2. Interacts with RPGRIP1L. Interacts with CRY1 in a KDM8-dependent manner. Interacts (via C-terminus) with phosphatase UBLCP1 (via ubiquitin-like domain); the interaction recruits UBLCP1 to the 19S regulatory particle where it dephosphorylates 19S subunit PSMC2/RPT1 which impairs PSMC2 ATPase activity and disrupts 26S proteasome assembly.

Its function is as follows. Component of the 26S proteasome, a multiprotein complex involved in the ATP-dependent degradation of ubiquitinated proteins. This complex plays a key role in the maintenance of protein homeostasis by removing misfolded or damaged proteins, which could impair cellular functions, and by removing proteins whose functions are no longer required. Therefore, the proteasome participates in numerous cellular processes, including cell cycle progression, apoptosis, or DNA damage repair. Binds to the intracellular domain of tumor necrosis factor type 1 receptor. The binding domain of TRAP1 and TRAP2 resides outside the death domain of TNFR1. In Bos taurus (Bovine), this protein is 26S proteasome non-ATPase regulatory subunit 2 (PSMD2).